The following is an 888-amino-acid chain: Protein sey1 (888 aa).

The tract at residues 1 to 24 (MDMATSNINGHGDRPSPAARFPTA) is disordered. At 1–771 (MDMATSNING…KRSAIGGVAQ (771 aa)) the chain is on the cytoplasmic side. The GB1/RHD3-type G domain occupies 76–315 (GFNYHLISVF…FEGGVFLPEY (240 aa)). GTP is bound at residue 86–93 (GSQSTGKS). Residues 703–723 (GNTPASVDPKDEEDLTPIGGV) are disordered. Residues 712-723 (KDEEDLTPIGGV) show a composition bias toward acidic residues. Positions 724–745 (DEEEGKSLEEEMTVLSEAKRQD) form a coiled coil. Residues 772–792 (VPLYFYGLLLALGWNEIVAVL) traverse the membrane as a helical segment. At 793–795 (RNP) the chain is on the lumenal side. A helical transmembrane segment spans residues 796–816 (IYFVFLILCGVAGYVTYTLNL). Residues 817-888 (WGPIIRMLNA…VREDEDVDEI (72 aa)) are Cytoplasmic-facing.

Belongs to the TRAFAC class dynamin-like GTPase superfamily. GB1/RHD3 GTPase family. RHD3 subfamily.

The protein resides in the endoplasmic reticulum membrane. Cooperates with the reticulon proteins and tubule-shaping DP1 family proteins to generate and maintain the structure of the tubular endoplasmic reticulum network. Has GTPase activity, which is required for its function in ER organization. This Sclerotinia sclerotiorum (strain ATCC 18683 / 1980 / Ss-1) (White mold) protein is Protein sey1 (sey1).